The following is a 149-amino-acid chain: Transcriptional repressor NrdR (149 aa).

A zinc finger spans residues 3–34 (CPFCAAVDTKVIDSRLVSDGSQVRRRRQCLDC). Residues 49–139 (PRVIKSDDVR…VYRSFEDIRE (91 aa)) form the ATP-cone domain.

Belongs to the NrdR family. The cofactor is Zn(2+).

Negatively regulates transcription of bacterial ribonucleotide reductase nrd genes and operons by binding to NrdR-boxes. The polypeptide is Transcriptional repressor NrdR (Yersinia enterocolitica serotype O:8 / biotype 1B (strain NCTC 13174 / 8081)).